The following is a 94-amino-acid chain: Small ribosomal subunit protein uS19 (94 aa).

The protein belongs to the universal ribosomal protein uS19 family.

Its function is as follows. Protein S19 forms a complex with S13 that binds strongly to the 16S ribosomal RNA. The chain is Small ribosomal subunit protein uS19 from Clostridium botulinum (strain Hall / ATCC 3502 / NCTC 13319 / Type A).